Consider the following 324-residue polypeptide: Probable UDP-sugar transporter protein SLC35A4 (324 aa).

Residues 1–18 lie on the Cytoplasmic side of the membrane; it reads MSVEDGGLPGLGGPGQAR. Residues 19–39 traverse the membrane as a helical segment; that stretch reads WTLMLLLSTATYGAHAPLLAL. The Lumenal segment spans residues 40–52; that stretch reads CHVDGRVPFRPSS. The helical transmembrane segment at 53-73 threads the bilayer; sequence AVLLTELTKLLLCALSLLVGW. Residues 74–85 are Cytoplasmic-facing; the sequence is QAWPPRTPPWRQ. The chain crosses the membrane as a helical span at residues 86–106; it reads AAPFALSALLYGANNNLVIHL. The Lumenal portion of the chain corresponds to 107-140; it reads QHYMDPSTYQVLSNLKIGSTALFYCLCLRRRLSA. A helical membrane pass occupies residues 141 to 161; it reads RQGLALLLLMAAGACYAAGGL. The Cytoplasmic segment spans residues 162-177; it reads RDPGSPLPESPSTAAS. A helical membrane pass occupies residues 178–198; the sequence is GPVPLHVTAPGLLLLLLYCLI. Over 199–214 the chain is Lumenal; that stretch reads SGLSSVYTELLLKRQR. Residues 215 to 235 traverse the membrane as a helical segment; the sequence is LPLALQNLFLYTFGVLLNLGL. Topologically, residues 236–248 are cytoplasmic; it reads HAGGGPGPGLLEG. The chain crosses the membrane as a helical span at residues 249 to 271; sequence FSGWAALVVLSQALNGLLMSAVM. Over 272-279 the chain is Lumenal; sequence KHGSSITR. The chain crosses the membrane as a helical span at residues 280–300; the sequence is LFVVSCSLVVNAVLSAALLRL. Residues 301-324 are Cytoplasmic-facing; it reads QLTAAFFLAALLIGLAVHLYYGSR.

Belongs to the nucleotide-sugar transporter family. SLC35A subfamily. In terms of assembly, found in a complex with SLC35A2 and SLC35A3.

Its subcellular location is the golgi apparatus membrane. It catalyses the reaction CDP-L-ribitol(in) + CDP(out) = CDP-L-ribitol(out) + CDP(in). Its function is as follows. Mediates the transport of CDP-ribitol. Does not exhibit CMP-sialic acid, UDP-galactose and UDP-N-acetylglucosamine transport activity. This is Probable UDP-sugar transporter protein SLC35A4 from Sus scrofa (Pig).